Here is a 471-residue protein sequence, read N- to C-terminus: Tetratricopeptide repeat protein 29 (471 aa).

TPR repeat units follow at residues 92 to 131 (DKLR…EAAE), 136 to 173 (YEEV…AQLI), 182 to 215 (AEAE…TQGR), 234 to 267 (VRTY…AREG), 274 to 307 (GEAS…STSL), 314 to 347 (GRAY…ARNN), and 354 to 387 (IQAC…AMEV).

It localises to the cytoplasm. Its subcellular location is the cytoskeleton. It is found in the flagellum axoneme. Its function is as follows. Axonemal protein which is implicated in axonemal and/or peri-axonemal structure assembly and regulates flagellum assembly and beating and therefore sperm motility. The sequence is that of Tetratricopeptide repeat protein 29 (Ttc29) from Rattus norvegicus (Rat).